The sequence spans 593 residues: MTADNAIFIPPYKADDQDVVVELHNRFGAEAFVAQETRTGMPVLWVKRAQLKEVLSFLRGVSKPYSMLYDLHGVDERLRTQRRGLPAADFSVFYHLLSVERNSDVMIKVSLSEGDLNLPTVTGIWPNANWYEREVWDMFGIDFAGHPHLSRIMMPPTWEGHPLRKDYPARATEFDPYSLTLAKQQLEEESARFNPEAWGMKRQGANEDYMFLNLGPNHPSAHGAFRIVLQLDGEEIVDCVPDIGYHHRGAEKMAERQSWHSFIPYTDRIDYLGGVMNNLPYVLAVEKLAGIQVPQKVDVIRIMLAEFFRITSHLLFLGTYIQDVGAMTPVFFTFTDRQRAYTVIEAITGFRLHPAWYRIGGVAHDLPRGWEKLVKDFVEWLPKRLDEYTKAALQNSILKGRTIGVAAYNTKEALEWGTTGAGLRATGCDFDLRKARPYSGYENFEFEVPLAHNGDAYDRCMVRVEEMRQSIRIIDQCLRNMPEGPYKADHPLTTPPPKERTLQHIETLITHFLQVSWGPVMPANESFQMIEATKGINSYYLTSDGGTMSYRTRIRTPSYPHLQQIPSVIKGSMVADLIAYLGSIDFVMADVDR.

Positions 1-184 (MTADNAIFIP…DPYSLTLAKQ (184 aa)) are NADH dehydrogenase I subunit C. The interval 208–593 (DYMFLNLGPN…IDFVMADVDR (386 aa)) is NADH dehydrogenase I subunit D.

It in the N-terminal section; belongs to the complex I 30 kDa subunit family. The protein in the C-terminal section; belongs to the complex I 49 kDa subunit family. NDH-1 is composed of 13 different subunits. Subunits NuoB, CD, E, F, and G constitute the peripheral sector of the complex.

It localises to the cell inner membrane. The enzyme catalyses a quinone + NADH + 5 H(+)(in) = a quinol + NAD(+) + 4 H(+)(out). Its function is as follows. NDH-1 shuttles electrons from NADH, via FMN and iron-sulfur (Fe-S) centers, to quinones in the respiratory chain. The immediate electron acceptor for the enzyme in this species is believed to be ubiquinone. Couples the redox reaction to proton translocation (for every two electrons transferred, four hydrogen ions are translocated across the cytoplasmic membrane), and thus conserves the redox energy in a proton gradient. The polypeptide is NADH-quinone oxidoreductase subunit C/D (Pseudomonas putida (strain W619)).